A 318-amino-acid chain; its full sequence is Death effector domain-containing protein (318 aa).

In terms of domain architecture, DED spans 25–103 (SLHRMFDIVG…RHDLLPYVTL (79 aa)). The segment at 128-191 (PRALSDPEPR…SVTPDPKEKQ (64 aa)) is disordered.

Interacts with CASP8, CASP10, KRT8, KRT18, CASP3 and FADD. Homodimerizes and heterodimerizes with DEDD2. Post-translationally, exists predominantly in a mono- or diubiquitinated form. In terms of tissue distribution, ubiquitously expressed.

The protein resides in the cytoplasm. Its subcellular location is the nucleus. It is found in the nucleolus. A scaffold protein that directs CASP3 to certain substrates and facilitates their ordered degradation during apoptosis. May also play a role in mediating CASP3 cleavage of KRT18. Regulates degradation of intermediate filaments during apoptosis. May play a role in the general transcription machinery in the nucleus and might be an important regulator of the activity of GTF3C3. Inhibits DNA transcription in vitro. The protein is Death effector domain-containing protein (Dedd) of Mus musculus (Mouse).